Here is a 591-residue protein sequence, read N- to C-terminus: Zinc finger protein 48 (591 aa).

Residue Met-1 is modified to N-acetylmethionine. 2 disordered regions span residues 1-24 (MEASPGDEFEHSPQERDGPEIKEE) and 55-80 (GLGKRQPRDPVPRILGEPRWGQGSND). 2 stretches are compositionally biased toward basic and acidic residues: residues 8-24 (EFEHSPQERDGPEIKEE) and 55-65 (GLGKRQPRDPV). The residue at position 12 (Ser-12) is a Phosphoserine. A Glycyl lysine isopeptide (Lys-Gly) (interchain with G-Cter in SUMO2) cross-link involves residue Lys-58. 2 C2H2-type zinc fingers span residues 83 to 105 (AVCGECGKSFRQMSDLVKHQRTH) and 111 to 133 (YKCGVCGKGFGDSSARIKHQRTH). The disordered stretch occupies residues 131–160 (RTHTGEKAYRVRPPAPGPPKMPRSRIPAGE). Lys-150 is covalently cross-linked (Glycyl lysine isopeptide (Lys-Gly) (interchain with G-Cter in SUMO2)). C2H2-type zinc fingers lie at residues 163 to 185 (TICGECGKSFRQSSDLVKHQRTH) and 191 to 213 (YKCGICGKGFGDSSARIKHQRTH). Residues 206–241 (RIKHQRTHRGDQLPRPVVPRRQPSPAAPAAPHRPKA) are disordered. Over residues 224 to 235 (PRRQPSPAAPAA) the composition is skewed to low complexity. Lys-240 is covalently cross-linked (Glycyl lysine isopeptide (Lys-Gly) (interchain with G-Cter in SUMO2)). 2 consecutive C2H2-type zinc fingers follow at residues 246-268 (YICTDCGKRFVLSCSLLSHQRSH) and 274-296 (FGCDVCGKEFARGSDLVKHLRVH). Residue Lys-300 forms a Glycyl lysine isopeptide (Lys-Gly) (interchain with G-Cter in SUMO2) linkage. C2H2-type zinc fingers lie at residues 302 to 324 (YLCPECGKGFADSSARVKHLRTH) and 330 to 352 (HACPECNRSFSLSSTLLRHRLTH). The interval 372-429 (PPPPPLGTSPSLTPRSPSHSSDGPFGLPGLEPEPGGPQAGEPPPPLAGDKPHKCPECG) is disordered. A compositionally biased stretch (low complexity) spans 379–404 (TSPSLTPRSPSHSSDGPFGLPGLEPE). The C2H2-type 9 zinc finger occupies 423–445 (HKCPECGKGFRRSSDLVKHHRVH). A Glycyl lysine isopeptide (Lys-Gly) (interchain with G-Cter in SUMO2) cross-link involves residue Lys-449. Residues 451–473 (YLCPECGKGFADSSARVKHLRTH) form a C2H2-type 10 zinc finger. The disordered stretch occupies residues 464–512 (SARVKHLRTHQGERTRPPPPPSTLLRPHNPPGSVPIVPQSRVQGRPSGP). Residues 480–496 (PPPPPSTLLRPHNPPGS) are compositionally biased toward pro residues. C2H2-type zinc fingers lie at residues 516–538 (HVCGFCGKEFPRSSDLVKHRRTH) and 544–566 (YKCAECGKGFGDSSARIKHQRGH). The segment at 564–591 (RGHLALKPFGVGDGPPRPLKEESPAGLE) is disordered. Positions 581–591 (PLKEESPAGLE) are enriched in basic and acidic residues. Lys-583 participates in a covalent cross-link: Glycyl lysine isopeptide (Lys-Gly) (interchain with G-Cter in SUMO2).

This sequence belongs to the krueppel C2H2-type zinc-finger protein family.

The protein resides in the nucleus. Its function is as follows. May be involved in transcriptional regulation. This is Zinc finger protein 48 (Znf48) from Mus musculus (Mouse).